We begin with the raw amino-acid sequence, 240 residues long: Transcriptional regulatory protein ResD (240 aa).

The region spanning 8 to 121 (KILVVDDEAR…EVVLRVKALL (114 aa)) is the Response regulatory domain. D57 carries the post-translational modification 4-aspartylphosphate. The ompR/PhoB-type DNA-binding region spans 137 to 237 (KNVLVFSHLS…VWGVGYKFEV (101 aa)).

Interacts with the RNA polymerase core. Phosphorylated by ResE.

The protein resides in the cytoplasm. Its function is as follows. Member of the two-component regulatory system ResD/ResE. Required for the expression of resA, ctaA, qcrABC and fnr; activation role in global regulation of aerobic and anaerobic respiration. In Bacillus subtilis (strain 168), this protein is Transcriptional regulatory protein ResD (resD).